We begin with the raw amino-acid sequence, 628 residues long: Keratin, type II cytoskeletal 3 (628 aa).

The tract at residues 1–21 (MSRQASKTSGGGSQGFSGRSA) is disordered. Residues 1 to 197 (MSRQASKTSG…DPQIGQVKAQ (197 aa)) form a head region. Ser13 and Ser56 each carry phosphoserine. The interval 198-233 (EREQIKTLNNKFASFIDKVRFLEQQNKVLETKWNLL) is coil 1A. Residues 198–513 (EREQIKTLNN…KLLEGEEYRM (316 aa)) enclose the IF rod domain. Residues 234-254 (QQQGTSSISGTNNLEPLFENH) form a linker 1 region. The tract at residues 255 to 346 (INYLRSYLDN…TLYDAELSQM (92 aa)) is coil 1B. An N6,N6-dimethyllysine modification is found at Lys296. The interval 347-370 (QSHISDTSVVLSMDNNRSLDLDSI) is linker 12. Ser364 carries the post-translational modification Phosphoserine. The segment at 371-509 (IAEVRAQYED…ATYRKLLEGE (139 aa)) is coil 2. The interval 510–628 (EYRMSGECPS…SSQSSQRYSR (119 aa)) is tail. Residues 605-628 (SSASNRGGSIKFSQSSQSSQRYSR) are disordered. Residues 617 to 628 (SQSSQSSQRYSR) are compositionally biased toward low complexity.

The protein belongs to the intermediate filament family. Heterotetramer of two type I and two type II keratins. Keratin-3 associates with keratin-12. As to expression, cornea specific.

This Homo sapiens (Human) protein is Keratin, type II cytoskeletal 3 (KRT3).